Consider the following 306-residue polypeptide: ATP synthase F(1) complex subunit gamma, mitochondrial (306 aa).

The transit peptide at 1–17 directs the protein to the mitochondrion; the sequence is MNSASKLFVVLASPANQ.

The protein belongs to the ATPase gamma chain family. Component of the ATP synthase complex composed at least of ATP5F1A/subunit alpha, ATP5F1B/subunit beta, ATP5MC1/subunit c (homooctomer), MT-ATP6/subunit a, MT-ATP8/subunit 8, ATP5ME/subunit e, ATP5MF/subunit f, ATP5MG/subunit g, ATP5MK/subunit k, ATP5MJ/subunit j, ATP5F1C/subunit gamma, ATP5F1D/subunit delta, ATP5F1E/subunit epsilon, ATP5PF/subunit F6, ATP5PB/subunit b, ATP5PD/subunit d, ATP5PO/subunit OSCP. ATP synthase complex consists of a soluble F(1) head domain (subunits alpha(3) and beta(3)) - the catalytic core - and a membrane F(0) domain - the membrane proton channel (subunits c, a, 8, e, f, g, k and j). These two domains are linked by a central stalk (subunits gamma, delta, and epsilon) rotating inside the F1 region and a stationary peripheral stalk (subunits F6, b, d, and OSCP).

It is found in the mitochondrion inner membrane. Subunit gamma, of the mitochondrial membrane ATP synthase complex (F(1)F(0) ATP synthase or Complex V) that produces ATP from ADP in the presence of a proton gradient across the membrane which is generated by electron transport complexes of the respiratory chain. ATP synthase complex consist of a soluble F(1) head domain - the catalytic core - and a membrane F(1) domain - the membrane proton channel. These two domains are linked by a central stalk rotating inside the F(1) region and a stationary peripheral stalk. During catalysis, ATP synthesis in the catalytic domain of F(1) is coupled via a rotary mechanism of the central stalk subunits to proton translocation. In vivo, can only synthesize ATP although its ATP hydrolase activity can be activated artificially in vitro. With the central stalk subunit delta, is essential for the biogenesis of F(1) catalytic part of the ATP synthase complex namely in the formation of F1 assembly intermediate. This is ATP synthase F(1) complex subunit gamma, mitochondrial from Dictyostelium discoideum (Social amoeba).